The chain runs to 326 residues: 5,10-methylenetetrahydromethanopterin reductase (326 aa).

Belongs to the mer family.

It localises to the cytoplasm. The enzyme catalyses 5-methyl-5,6,7,8-tetrahydromethanopterin + oxidized coenzyme F420-(gamma-L-Glu)(n) + H(+) = 5,10-methylenetetrahydromethanopterin + reduced coenzyme F420-(gamma-L-Glu)(n). Its pathway is one-carbon metabolism; methanogenesis from CO(2); methyl-coenzyme M from 5,10-methylene-5,6,7,8-tetrahydromethanopterin: step 1/2. Functionally, catalyzes the reversible reduction of methylene-H(4)MPT to methyl-H(4)MPT. This Methanolobus tindarius protein is 5,10-methylenetetrahydromethanopterin reductase.